The following is a 403-amino-acid chain: Argininosuccinate synthase (403 aa).

Residues Ala-13 to Ser-21 and Ala-40 each bind ATP. Positions 91 and 96 each coordinate L-citrulline. An ATP-binding site is contributed by Gly-121. 3 residues coordinate L-aspartate: Thr-123, Asn-127, and Asp-128. Asn-127 contributes to the L-citrulline binding site. L-citrulline is bound by residues Arg-131, Ser-180, Ser-189, Glu-265, and Tyr-277.

The protein belongs to the argininosuccinate synthase family. Type 1 subfamily. As to quaternary structure, homotetramer.

It is found in the cytoplasm. The catalysed reaction is L-citrulline + L-aspartate + ATP = 2-(N(omega)-L-arginino)succinate + AMP + diphosphate + H(+). It functions in the pathway amino-acid biosynthesis; L-arginine biosynthesis; L-arginine from L-ornithine and carbamoyl phosphate: step 2/3. This is Argininosuccinate synthase from Leptospira interrogans serogroup Icterohaemorrhagiae serovar copenhageni (strain Fiocruz L1-130).